Here is a 125-residue protein sequence, read N- to C-terminus: Cyclic diguanosine monophosphate-binding protein PA4608 (125 aa).

3',3'-c-di-GMP is bound at residue 6–13; it reads DERRRFHR. A PilZ domain is found at 7–103; the sequence is ERRRFHRIAF…SISHLRRLVE (97 aa). The RXXXR motif; surrounds the surface of the c-di-GMP binding site motif lies at 9 to 13; it reads RRFHR. Positions 35-40 match the DXSXXG motif; surrounds the surface of the c-di-GMP binding site motif; it reads DVSLHG. Trp77 provides a ligand contact to 3',3'-c-di-GMP.

Monomer in both c-di-GMP-bound and free forms.

Functionally, binds the second messenger bis-(3'-5') cyclic dimeric guanosine monophosphate (c-di-GMP). Can bind two c-di-GMP molecules per monomer. May play a role in bacterial second-messenger regulated processes. Binding to c-di-GMP induces a conformational change of the C- and N-termini resulting in the exposure of a highly negative surface on one side of the protein to a possible effector protein. The chain is Cyclic diguanosine monophosphate-binding protein PA4608 from Pseudomonas aeruginosa (strain ATCC 15692 / DSM 22644 / CIP 104116 / JCM 14847 / LMG 12228 / 1C / PRS 101 / PAO1).